Reading from the N-terminus, the 141-residue chain is Hemoglobin subunit alpha (141 aa).

Residues V1–R141 enclose the Globin domain. S3 is subject to Phosphoserine. Position 7 is an N6-succinyllysine (K7). The residue at position 8 (T8) is a Phosphothreonine. K11 is subject to N6-succinyllysine. K16 bears the N6-acetyllysine; alternate mark. The residue at position 16 (K16) is an N6-succinyllysine; alternate. Y24 bears the Phosphotyrosine mark. S35 is subject to Phosphoserine. An N6-succinyllysine modification is found at K40. H58 contacts O2. H87 provides a ligand contact to heme b. S102 carries the phosphoserine modification. Position 108 is a phosphothreonine (T108). S124 and S131 each carry phosphoserine. 2 positions are modified to phosphothreonine: T134 and T137. S138 carries the post-translational modification Phosphoserine.

The protein belongs to the globin family. In terms of assembly, heterotetramer of two alpha chains and two beta chains. As to expression, red blood cells.

In terms of biological role, involved in oxygen transport from the lung to the various peripheral tissues. Functionally, hemopressin acts as an antagonist peptide of the cannabinoid receptor CNR1. Hemopressin-binding efficiently blocks cannabinoid receptor CNR1 and subsequent signaling. The sequence is that of Hemoglobin subunit alpha (HBA) from Cynopterus sphinx (Indian short-nosed fruit bat).